Consider the following 217-residue polypeptide: Elongation factor Ts (217 aa).

Positions 82-85 (TDFV) are involved in Mg(2+) ion dislocation from EF-Tu.

The protein belongs to the EF-Ts family.

It localises to the cytoplasm. Associates with the EF-Tu.GDP complex and induces the exchange of GDP to GTP. It remains bound to the aminoacyl-tRNA.EF-Tu.GTP complex up to the GTP hydrolysis stage on the ribosome. This Prochlorococcus marinus (strain SARG / CCMP1375 / SS120) protein is Elongation factor Ts.